The sequence spans 157 residues: 17.6 kDa class I heat shock protein 3 (157 aa).

Positions 43 to 157 (DVAAFTNAKV…PEVKSIDISG (115 aa)) constitute a sHSP domain.

This sequence belongs to the small heat shock protein (HSP20) family. May form oligomeric structures.

Its subcellular location is the cytoplasm. The protein is 17.6 kDa class I heat shock protein 3 (HSP17.6C) of Arabidopsis thaliana (Mouse-ear cress).